The sequence spans 488 residues: 26S proteasome non-ATPase regulatory subunit 3 homolog A (488 aa).

A PCI domain is found at 240-421; that stretch reads CRYLFYLGKI…GCMVSKETGD (182 aa). The tract at residues 451 to 488 is disordered; the sequence is RFPPNTHKEKESDEKRRERKQQEEELAKHMAEEDDDDF. Residues 456-481 are compositionally biased toward basic and acidic residues; that stretch reads THKEKESDEKRRERKQQEEELAKHMA.

This sequence belongs to the proteasome subunit S3 family. In terms of assembly, component of the 19S regulatory particle (RP/PA700) lid subcomplex of the 26S proteasome. The 26S proteasome is composed of a core protease (CP), known as the 20S proteasome, capped at one or both ends by the 19S regulatory particle (RP/PA700). The RP/PA700 complex is composed of at least 17 different subunits in two subcomplexes, the base and the lid, which form the portions proximal and distal to the 20S proteolytic core, respectively. Interacts with UCH1 and UCH2. As to expression, ubiquitous with highest expression in flowers.

Acts as a regulatory subunit of the 26 proteasome which is involved in the ATP-dependent degradation of ubiquitinated proteins. This Arabidopsis thaliana (Mouse-ear cress) protein is 26S proteasome non-ATPase regulatory subunit 3 homolog A.